Here is a 178-residue protein sequence, read N- to C-terminus: Cytochrome b6-f complex iron-sulfur subunit 1 (178 aa).

Residues 17–36 (LLNFLAGTTVAVTASAGAYA) traverse the membrane as a helical segment. A Rieske domain is found at 61–161 (GNPIPASQIL…VAVVDDQIFI (101 aa)). Residues Cys107, His109, Cys125, and His128 each contribute to the [2Fe-2S] cluster site. Cysteines 112 and 127 form a disulfide.

The protein belongs to the Rieske iron-sulfur protein family. In terms of assembly, the 4 large subunits of the cytochrome b6-f complex are cytochrome b6, subunit IV (17 kDa polypeptide, PetD), cytochrome f and the Rieske protein, while the 4 small subunits are PetG, PetL, PetM and PetN. The complex functions as a dimer. [2Fe-2S] cluster serves as cofactor.

Its subcellular location is the cellular thylakoid membrane. The catalysed reaction is 2 oxidized [plastocyanin] + a plastoquinol + 2 H(+)(in) = 2 reduced [plastocyanin] + a plastoquinone + 4 H(+)(out). Functionally, component of the cytochrome b6-f complex, which mediates electron transfer between photosystem II (PSII) and photosystem I (PSI), cyclic electron flow around PSI, and state transitions. The sequence is that of Cytochrome b6-f complex iron-sulfur subunit 1 from Synechocystis sp. (strain ATCC 27184 / PCC 6803 / Kazusa).